The sequence spans 267 residues: Imidazole glycerol phosphate synthase subunit HisF (267 aa).

Active-site residues include D22 and D141.

It belongs to the HisA/HisF family. Heterodimer of HisH and HisF.

It localises to the cytoplasm. It catalyses the reaction 5-[(5-phospho-1-deoxy-D-ribulos-1-ylimino)methylamino]-1-(5-phospho-beta-D-ribosyl)imidazole-4-carboxamide + L-glutamine = D-erythro-1-(imidazol-4-yl)glycerol 3-phosphate + 5-amino-1-(5-phospho-beta-D-ribosyl)imidazole-4-carboxamide + L-glutamate + H(+). It functions in the pathway amino-acid biosynthesis; L-histidine biosynthesis; L-histidine from 5-phospho-alpha-D-ribose 1-diphosphate: step 5/9. In terms of biological role, IGPS catalyzes the conversion of PRFAR and glutamine to IGP, AICAR and glutamate. The HisF subunit catalyzes the cyclization activity that produces IGP and AICAR from PRFAR using the ammonia provided by the HisH subunit. The protein is Imidazole glycerol phosphate synthase subunit HisF of Mycobacterium tuberculosis (strain ATCC 25177 / H37Ra).